Reading from the N-terminus, the 176-residue chain is NAD(P)H-quinone oxidoreductase subunit 6, chloroplastic (176 aa).

5 helical membrane passes run 10-30, 33-53, 61-81, 92-112, and 153-173; these read FLLV…VFLP, IYSA…YILL, AQLL…VMFM, LWTV…ISLI, and FLPF…AIAI.

Belongs to the complex I subunit 6 family. NDH is composed of at least 16 different subunits, 5 of which are encoded in the nucleus.

It is found in the plastid. The protein resides in the chloroplast thylakoid membrane. The catalysed reaction is a plastoquinone + NADH + (n+1) H(+)(in) = a plastoquinol + NAD(+) + n H(+)(out). The enzyme catalyses a plastoquinone + NADPH + (n+1) H(+)(in) = a plastoquinol + NADP(+) + n H(+)(out). Its function is as follows. NDH shuttles electrons from NAD(P)H:plastoquinone, via FMN and iron-sulfur (Fe-S) centers, to quinones in the photosynthetic chain and possibly in a chloroplast respiratory chain. The immediate electron acceptor for the enzyme in this species is believed to be plastoquinone. Couples the redox reaction to proton translocation, and thus conserves the redox energy in a proton gradient. This Jasminum nudiflorum (Winter jasmine) protein is NAD(P)H-quinone oxidoreductase subunit 6, chloroplastic (ndhG).